A 249-amino-acid chain; its full sequence is BPI fold-containing family A member 1 (249 aa).

The N-terminal stretch at 1 to 15 (MFQVAGLIVFCGLLA) is a signal peptide. Residues 81 to 86 (LLGGLL) form an important for surfactant activity and antibacterial properties region. N-linked (GlcNAc...) asparagine glycosylation is present at Asn151. An intrachain disulfide couples Cys173 to Cys217.

The protein belongs to the BPI/LBP/Plunc superfamily. Plunc family. Monomer. Interacts (via N-terminus) with SCNN1B, a subunit of the heterotrimeric epithelial sodium channel (ENaC); this inhibits proteolytic activation of ENaC. Expressed in lung and trachea.

It localises to the secreted. Lipid-binding protein which shows high specificity for the surfactant phospholipid dipalmitoylphosphatidylcholine (DPPC). Plays a role in the innate immune responses of the upper airways. Reduces the surface tension in secretions from airway epithelia and inhibits the formation of biofilm by pathogenic Gram-negative bacteria, such as P.aeruginosa and K.pneumoniae. Negatively regulates proteolytic cleavage of SCNN1G, an event that is required for activation of the epithelial sodium channel (ENaC), and thereby contributes to airway surface liquid homeostasis and proper clearance of mucus. Plays a role in the airway inflammatory response after exposure to irritants. May attract macrophages and neutrophils. The protein is BPI fold-containing family A member 1 (BPIFA1) of Sus scrofa (Pig).